The sequence spans 98 residues: MPGITREEVAHLARLARLELKGEELDHFAGQLDDIIGAVARVSEVADQDVPPTSHPLPLTNVMRADEVRPSLTPAQALSGAPAQEQQRFKVPQILGED.

The segment at 75–98 (AQALSGAPAQEQQRFKVPQILGED) is disordered.

Belongs to the GatC family. In terms of assembly, heterotrimer of A, B and C subunits.

The enzyme catalyses L-glutamyl-tRNA(Gln) + L-glutamine + ATP + H2O = L-glutaminyl-tRNA(Gln) + L-glutamate + ADP + phosphate + H(+). It catalyses the reaction L-aspartyl-tRNA(Asn) + L-glutamine + ATP + H2O = L-asparaginyl-tRNA(Asn) + L-glutamate + ADP + phosphate + 2 H(+). Allows the formation of correctly charged Asn-tRNA(Asn) or Gln-tRNA(Gln) through the transamidation of misacylated Asp-tRNA(Asn) or Glu-tRNA(Gln) in organisms which lack either or both of asparaginyl-tRNA or glutaminyl-tRNA synthetases. The reaction takes place in the presence of glutamine and ATP through an activated phospho-Asp-tRNA(Asn) or phospho-Glu-tRNA(Gln). The chain is Aspartyl/glutamyl-tRNA(Asn/Gln) amidotransferase subunit C from Streptomyces griseus subsp. griseus (strain JCM 4626 / CBS 651.72 / NBRC 13350 / KCC S-0626 / ISP 5235).